The primary structure comprises 378 residues: Homoserine O-acetyltransferase (378 aa).

An AB hydrolase-1 domain is found at 54-355 (NAILVCHALS…NNPAGHDSFL (302 aa)). The Nucleophile role is filled by serine 159. Arginine 228 provides a ligand contact to substrate. Catalysis depends on residues aspartate 318 and histidine 351. A substrate-binding site is contributed by aspartate 352.

The protein belongs to the AB hydrolase superfamily. MetX family. As to quaternary structure, homodimer.

It localises to the cytoplasm. It catalyses the reaction L-homoserine + acetyl-CoA = O-acetyl-L-homoserine + CoA. The protein operates within amino-acid biosynthesis; L-methionine biosynthesis via de novo pathway; O-acetyl-L-homoserine from L-homoserine: step 1/1. Transfers an acetyl group from acetyl-CoA to L-homoserine, forming acetyl-L-homoserine. The chain is Homoserine O-acetyltransferase from Leptospira biflexa serovar Patoc (strain Patoc 1 / Ames).